The following is a 506-amino-acid chain: Kynurenine 3-monooxygenase (506 aa).

The tract at residues 153–174 (QETSLLPGEESEKDKKQNTEDE) is disordered. The segment covering 162–171 (ESEKDKKQNT) has biased composition (basic and acidic residues).

It belongs to the aromatic-ring hydroxylase family. KMO subfamily. FAD is required as a cofactor.

Its subcellular location is the mitochondrion outer membrane. The enzyme catalyses L-kynurenine + NADPH + O2 + H(+) = 3-hydroxy-L-kynurenine + NADP(+) + H2O. It participates in cofactor biosynthesis; NAD(+) biosynthesis; quinolinate from L-kynurenine: step 1/3. In terms of biological role, catalyzes the hydroxylation of L-kynurenine (L-Kyn) to form 3-hydroxy-L-kynurenine (L-3OHKyn). Required for synthesis of quinolinic acid. The protein is Kynurenine 3-monooxygenase of Cryptococcus neoformans var. neoformans serotype D (strain JEC21 / ATCC MYA-565) (Filobasidiella neoformans).